We begin with the raw amino-acid sequence, 496 residues long: UDP-glycosyltransferase 73C3 (496 aa).

UDP-alpha-D-glucose is bound by residues Ser297, 357-359 (APQ), 374-382 (HCGWNSTLE), and 396-399 (FGDQ).

This sequence belongs to the UDP-glycosyltransferase family.

In Arabidopsis thaliana (Mouse-ear cress), this protein is UDP-glycosyltransferase 73C3 (UGT73C3).